Consider the following 247-residue polypeptide: Trypsin (247 aa).

A signal peptide spans 1-21; sequence LTTVISYFALVAFALVGVSYA. The propeptide at 22–30 is activation peptide; that stretch reads TPKASINGR. Residues 31–247 enclose the Peptidase S1 domain; sequence IVGGEMTDIS…QSNFPGVYGI (217 aa). Cysteines 61 and 77 form a disulfide. Active-site charge relay system residues include His76 and Asp120. 2 cysteine pairs are disulfide-bonded: Cys185/Cys201 and Cys212/Cys236. The active-site Charge relay system is Ser216.

It belongs to the peptidase S1 family. In terms of tissue distribution, midgut.

It localises to the secreted. It is found in the extracellular space. It carries out the reaction Preferential cleavage: Arg-|-Xaa, Lys-|-Xaa.. The sequence is that of Trypsin from Simulium vittatum (Striped black fly).